The following is a 730-amino-acid chain: Phosphoribosylformylglycinamidine synthase subunit PurL (730 aa).

The active site involves histidine 44. The ATP site is built by tyrosine 47 and lysine 86. A Mg(2+)-binding site is contributed by glutamate 88. Residues 89-92 (SHNH) and arginine 111 contribute to the substrate site. The active-site Proton acceptor is histidine 90. Aspartate 112 is a binding site for Mg(2+). Residue glutamine 235 coordinates substrate. Residue aspartate 263 participates in Mg(2+) binding. 307 to 309 (ESQ) is a substrate binding site. Residues asparagine 489 and glycine 526 each contribute to the ATP site. Asparagine 527 contributes to the Mg(2+) binding site. Residue serine 529 coordinates substrate.

It belongs to the FGAMS family. Monomer. Part of the FGAM synthase complex composed of 1 PurL, 1 PurQ and 2 PurS subunits.

It localises to the cytoplasm. It carries out the reaction N(2)-formyl-N(1)-(5-phospho-beta-D-ribosyl)glycinamide + L-glutamine + ATP + H2O = 2-formamido-N(1)-(5-O-phospho-beta-D-ribosyl)acetamidine + L-glutamate + ADP + phosphate + H(+). It functions in the pathway purine metabolism; IMP biosynthesis via de novo pathway; 5-amino-1-(5-phospho-D-ribosyl)imidazole from N(2)-formyl-N(1)-(5-phospho-D-ribosyl)glycinamide: step 1/2. Its function is as follows. Part of the phosphoribosylformylglycinamidine synthase complex involved in the purines biosynthetic pathway. Catalyzes the ATP-dependent conversion of formylglycinamide ribonucleotide (FGAR) and glutamine to yield formylglycinamidine ribonucleotide (FGAM) and glutamate. The FGAM synthase complex is composed of three subunits. PurQ produces an ammonia molecule by converting glutamine to glutamate. PurL transfers the ammonia molecule to FGAR to form FGAM in an ATP-dependent manner. PurS interacts with PurQ and PurL and is thought to assist in the transfer of the ammonia molecule from PurQ to PurL. This chain is Phosphoribosylformylglycinamidine synthase subunit PurL, found in Pelagibacter ubique (strain HTCC1062).